Here is a 400-residue protein sequence, read N- to C-terminus: tRNA-specific 2-thiouridylase MnmA (400 aa).

ATP-binding positions include 19 to 26 (AMSGGVDS) and leucine 45. The active-site Nucleophile is the cysteine 113. Cysteine 113 and cysteine 210 are disulfide-bonded. Glycine 137 is a binding site for ATP. Positions 160–162 (RDQ) are interaction with tRNA. Residue cysteine 210 is the Cysteine persulfide intermediate of the active site.

This sequence belongs to the MnmA/TRMU family.

The protein localises to the cytoplasm. It catalyses the reaction S-sulfanyl-L-cysteinyl-[protein] + uridine(34) in tRNA + AH2 + ATP = 2-thiouridine(34) in tRNA + L-cysteinyl-[protein] + A + AMP + diphosphate + H(+). Catalyzes the 2-thiolation of uridine at the wobble position (U34) of tRNA, leading to the formation of s(2)U34. This Nitrobacter winogradskyi (strain ATCC 25391 / DSM 10237 / CIP 104748 / NCIMB 11846 / Nb-255) protein is tRNA-specific 2-thiouridylase MnmA.